The primary structure comprises 170 residues: Disulfide bond formation protein B 1 (170 aa).

The Cytoplasmic portion of the chain corresponds to 1–14 (MNDYTLAIRRERRL). Residues 15 to 31 (LMLLGWVCIALLAGALY) form a helical membrane-spanning segment. The Periplasmic segment spans residues 32-49 (LQYVKNEDPCPLCIIQRY). An intrachain disulfide couples C41 to C44. A helical membrane pass occupies residues 50–64 (FFCAIGIFAFLAAGI). At 65–71 (RNWRGVW) the chain is on the cytoplasmic side. A helical transmembrane segment spans residues 72 to 89 (VLELLIAIAAAGGVGTAA). Residues 90-144 (RHLTIQMNPGFSCGFDTLQPIVDSLPPAQWFPGMFKVAGLCETVYPPIFGILLPG) lie on the Periplasmic side of the membrane. An intrachain disulfide couples C102 to C130. Residues 145–163 (WSLIGFAVILIAVVASLWR) traverse the membrane as a helical segment. Over 164-170 (HRRKLVG) the chain is Cytoplasmic.

Belongs to the DsbB family.

The protein resides in the cell inner membrane. Functionally, required for disulfide bond formation in some periplasmic proteins. Acts by oxidizing the DsbA protein. The protein is Disulfide bond formation protein B 1 of Burkholderia lata (strain ATCC 17760 / DSM 23089 / LMG 22485 / NCIMB 9086 / R18194 / 383).